A 239-amino-acid chain; its full sequence is LexA repressor (239 aa).

A DNA-binding region (H-T-H motif) is located at residues 26-46; the sequence is FDEMKDALDLASKSGIHRLIT. A disordered region spans residues 80 to 108; sequence RRGFSPSVIEGSLGKPQPAAAPAPAKPVA. Active-site for autocatalytic cleavage activity residues include Ser-159 and Lys-197.

It belongs to the peptidase S24 family. Homodimer.

It carries out the reaction Hydrolysis of Ala-|-Gly bond in repressor LexA.. Functionally, represses a number of genes involved in the response to DNA damage (SOS response), including recA and lexA. In the presence of single-stranded DNA, RecA interacts with LexA causing an autocatalytic cleavage which disrupts the DNA-binding part of LexA, leading to derepression of the SOS regulon and eventually DNA repair. This is LexA repressor from Rhizobium leguminosarum bv. trifolii (strain WSM2304).